The following is a 402-amino-acid chain: Tumor necrosis factor receptor superfamily member 11B (402 aa).

Positions 1–21 (MNKLLCCALVFLDISIKWTTQ) are cleaved as a signal peptide. TNFR-Cys repeat units lie at residues 24 to 62 (FPPK…KTVC), 64 to 105 (PCPD…NRVC), 106 to 142 (ECEE…NTVC), and 144 to 185 (RCPD…DNIC). Intrachain disulfides connect cysteine 41–cysteine 54, cysteine 44–cysteine 62, cysteine 65–cysteine 80, cysteine 83–cysteine 97, cysteine 87–cysteine 105, cysteine 107–cysteine 118, cysteine 124–cysteine 142, and cysteine 145–cysteine 160. Asparagine 165 and asparagine 178 each carry an N-linked (GlcNAc...) asparagine glycan. The cysteines at positions 166 and 185 are disulfide-linked. 2 Death domains span residues 198–269 (IDMT…DMVK) and 270–365 (KIIQ…VIQS).

As to quaternary structure, homodimer. Interacts with TNFSF10 and TNFSF11. Post-translationally, N-glycosylated. Contains sialic acid residues.

The protein localises to the secreted. Functionally, acts as a decoy receptor for TNFSF11/RANKL and thereby neutralizes its function in osteoclastogenesis. Inhibits the activation of osteoclasts and promotes osteoclast apoptosis. Bone homeostasis seems to depend on the local ratio between TNFSF11 and TNFRSF11B. May also play a role in preventing arterial calcification. May act as decoy receptor for TNFSF10/TRAIL and protect against apoptosis. TNFSF10/TRAIL binding blocks the inhibition of osteoclastogenesis. The chain is Tumor necrosis factor receptor superfamily member 11B (TNFRSF11B) from Bos taurus (Bovine).